The following is a 229-amino-acid chain: Uracil-DNA glycosylase (229 aa).

Aspartate 64 (proton acceptor) is an active-site residue.

It belongs to the uracil-DNA glycosylase (UDG) superfamily. UNG family.

It localises to the cytoplasm. The enzyme catalyses Hydrolyzes single-stranded DNA or mismatched double-stranded DNA and polynucleotides, releasing free uracil.. Excises uracil residues from the DNA which can arise as a result of misincorporation of dUMP residues by DNA polymerase or due to deamination of cytosine. The sequence is that of Uracil-DNA glycosylase from Klebsiella pneumoniae (strain 342).